The following is a 476-amino-acid chain: Glutamate--tRNA ligase (476 aa).

The 'HIGH' region motif lies at P9 to T19. The span at R109–S129 shows a compositional bias: basic and acidic residues. The disordered stretch occupies residues R109 to E133. The 'KMSKS' region signature appears at K248–R252. K251 contributes to the ATP binding site.

This sequence belongs to the class-I aminoacyl-tRNA synthetase family. Glutamate--tRNA ligase type 1 subfamily. Monomer.

Its subcellular location is the cytoplasm. The enzyme catalyses tRNA(Glu) + L-glutamate + ATP = L-glutamyl-tRNA(Glu) + AMP + diphosphate. Functionally, catalyzes the attachment of glutamate to tRNA(Glu) in a two-step reaction: glutamate is first activated by ATP to form Glu-AMP and then transferred to the acceptor end of tRNA(Glu). The protein is Glutamate--tRNA ligase of Prochlorococcus marinus (strain MIT 9211).